Reading from the N-terminus, the 307-residue chain is Elongation factor Ts (307 aa).

Residues 79–82 (TDFV) are involved in Mg(2+) ion dislocation from EF-Tu.

It belongs to the EF-Ts family.

It localises to the cytoplasm. In terms of biological role, associates with the EF-Tu.GDP complex and induces the exchange of GDP to GTP. It remains bound to the aminoacyl-tRNA.EF-Tu.GTP complex up to the GTP hydrolysis stage on the ribosome. This Sinorhizobium medicae (strain WSM419) (Ensifer medicae) protein is Elongation factor Ts.